A 169-amino-acid chain; its full sequence is Large ribosomal subunit protein uL10 (169 aa).

The protein belongs to the universal ribosomal protein uL10 family. Part of the ribosomal stalk of the 50S ribosomal subunit. The N-terminus interacts with L11 and the large rRNA to form the base of the stalk. The C-terminus forms an elongated spine to which L12 dimers bind in a sequential fashion forming a multimeric L10(L12)X complex.

Forms part of the ribosomal stalk, playing a central role in the interaction of the ribosome with GTP-bound translation factors. This is Large ribosomal subunit protein uL10 from Rickettsia akari (strain Hartford).